Reading from the N-terminus, the 266-residue chain is Aspartate/glutamate leucyltransferase (266 aa).

It belongs to the R-transferase family. Bpt subfamily.

It localises to the cytoplasm. It carries out the reaction N-terminal L-glutamyl-[protein] + L-leucyl-tRNA(Leu) = N-terminal L-leucyl-L-glutamyl-[protein] + tRNA(Leu) + H(+). It catalyses the reaction N-terminal L-aspartyl-[protein] + L-leucyl-tRNA(Leu) = N-terminal L-leucyl-L-aspartyl-[protein] + tRNA(Leu) + H(+). Its function is as follows. Functions in the N-end rule pathway of protein degradation where it conjugates Leu from its aminoacyl-tRNA to the N-termini of proteins containing an N-terminal aspartate or glutamate. This Rhizorhabdus wittichii (strain DSM 6014 / CCUG 31198 / JCM 15750 / NBRC 105917 / EY 4224 / RW1) (Sphingomonas wittichii) protein is Aspartate/glutamate leucyltransferase.